A 365-amino-acid chain; its full sequence is Class E basic helix-loop-helix protein 22 (365 aa).

Disordered regions lie at residues 34–93 (AFRS…GGGG), 134–156 (GRGSVAESSGGEQSPDDDSDGRC), and 188–225 (HLHGGAGLPPGGSTGSGGGGSGGGGGGGSSSKKSKEQK). Residues 82-93 (GGGGAGGGGGGG) show a composition bias toward gly residues. The segment covering 191-216 (GGAGLPPGGSTGSGGGGSGGGGGGGS) has biased composition (gly residues). The bHLH domain occupies 226–280 (ALRLNINARERRRMHDLNDALDELRAVIPYAHSPSVRKLSKIATLLLAKNYILMQ).

As to quaternary structure, heterodimer with other bHLH proteins, like TCF3/E47. Kidney, lung, brain and pancreas (insulinoma).

It is found in the nucleus. Inhibits DNA binding of TCF3/E47 homodimers and TCF3 (E47)/NEUROD1 heterodimers and acts as a strong repressor of Neurod1 and Myod-responsive genes, probably by heterodimerization with class a basic helix-loop-helix factors. Despite the presence of an intact basic domain, does not bind to DNA. This chain is Class E basic helix-loop-helix protein 22 (BHLHE22), found in Mesocricetus auratus (Golden hamster).